The following is a 516-amino-acid chain: H/ACA ribonucleoprotein complex subunit DKC1 (516 aa).

The tract at residues 1–24 is disordered; sequence MADGDGSSVKKRRKKDKRSLPDED. The Nucleophile role is filled by aspartate 123. Positions 294-369 constitute a PUA domain; sequence HKRLVMKDSA…VVAKIKRVIM (76 aa). A disordered region spans residues 422-516; the sequence is KKEAAKVPQA…KQKEVEESSE (95 aa). Positions 434–446 are enriched in basic and acidic residues; it reads EVERAPKRKRESE. Over residues 453–464 the composition is skewed to pro residues; that stretch reads SPPPSPATPPPE. A coiled-coil region spans residues 463 to 516; the sequence is PEELSKKEKKKKKKEKKAKEAAESGEEQVEVISESSAKKKKKKKKQKEVEESSE. The segment covering 469–478 has biased composition (basic residues); that stretch reads KEKKKKKKEK.

The protein belongs to the pseudouridine synthase TruB family. In terms of assembly, part of the H/ACA small nucleolar ribonucleoprotein (H/ACA snoRNP) complex, which contains NHP2/NOLA2, GAR1/NOLA1, NOP10/NOLA3, and DKC1/NOLA4, which is presumed to be the catalytic subunit. The complex contains a stable core formed by binding of one or two NOP10-DKC1 heterodimers to NHP2; GAR1 subsequently binds to this core via DKC1. The complex binds a box H/ACA small nucleolar RNA (snoRNA), which may target the specific site of modification within the RNA substrate.

It is found in the nucleus. It localises to the nucleolus. The protein localises to the cajal body. It carries out the reaction uridine in 5S rRNA = pseudouridine in 5S rRNA. In terms of biological role, catalytic subunit of H/ACA small nucleolar ribonucleoprotein (H/ACA snoRNP) complex, which catalyzes pseudouridylation of rRNA. This involves the isomerization of uridine such that the ribose is subsequently attached to C5, instead of the normal N1. Each rRNA can contain up to 100 pseudouridine ('psi') residues, which may serve to stabilize the conformation of rRNAs. Required for ribosome biogenesis and telomere maintenance. This Gallus gallus (Chicken) protein is H/ACA ribonucleoprotein complex subunit DKC1 (DKC1).